We begin with the raw amino-acid sequence, 988 residues long: Band 4.1-like protein 2 (988 aa).

The tract at residues Met1 to Val190 is disordered. Thr2 is modified (N-acetylthreonine). Phosphoserine is present on Ser7. Residues Ala22–Glu31 show a composition bias toward basic and acidic residues. Phosphoserine occurs at positions 38, 86, and 116. Composition is skewed to basic and acidic residues over residues Ile110 to Pro148 and Glu160 to Val190. Residues Ser201, Ser379, Ser395, Ser492, Ser543, Ser555, Ser561, and Ser582 each carry the phosphoserine modification. One can recognise an FERM domain in the interval Val211–Ser492. Residues Gln495–Glu651 form a hydrophilic region. The segment at Thr514 to Lys594 is disordered. Residues Ser555–Val567 show a composition bias toward low complexity. Tyr606 bears the Phosphotyrosine mark. Ser610 and Ser630 each carry phosphoserine. Disordered stretches follow at residues Met639 to Ala788 and Gln804 to Leu839. A spectrin--actin-binding region spans residues Lys652–Pro837. Over residues Val673–Ser686 the composition is skewed to basic and acidic residues. Ser698 carries the post-translational modification Phosphoserine. A compositionally biased stretch (basic and acidic residues) spans Gly704–Ser717. A compositionally biased stretch (low complexity) spans Thr718 to Ser729. Positions Gln739–Glu751 are enriched in basic and acidic residues. Thr745 is modified (phosphothreonine). A compositionally biased stretch (acidic residues) spans Glu752–Pro764. Over residues Asp828–Leu839 the composition is skewed to basic and acidic residues. Positions His838–Glu988 are C-terminal (CTD).

Interacts with FCGR1A. Interacts with TRPC4. Interacts (via CTD domain) with FKBP2. Interacts with NUMA1; this interaction is negatively regulated by CDK1 during metaphase and promotes anaphase-specific localization of NUMA1 in symmetrically dividing cells. Widely expressed.

It is found in the cytoplasm. The protein localises to the cytoskeleton. It localises to the cell cortex. Its subcellular location is the cell membrane. Its function is as follows. Required for dynein-dynactin complex and NUMA1 recruitment at the mitotic cell cortex during anaphase. In Mus musculus (Mouse), this protein is Band 4.1-like protein 2.